The sequence spans 297 residues: ClpXP adapter protein SpxH (297 aa).

It belongs to the SpxH family. As to quaternary structure, interacts with Spx.

Its subcellular location is the cytoplasm. Functionally, adapter protein required for efficient degradation of Spx by ClpXP under non-stress conditions. Interaction with Spx stabilizes Spx and exposes the C-terminus of Spx for recognition and proteolysis by ClpXP. This Bacillus cereus (strain ATCC 14579 / DSM 31 / CCUG 7414 / JCM 2152 / NBRC 15305 / NCIMB 9373 / NCTC 2599 / NRRL B-3711) protein is ClpXP adapter protein SpxH.